The following is a 201-amino-acid chain: Recombination protein RecR (201 aa).

The C4-type zinc-finger motif lies at 60-75; that stretch reads CSVCGNVDTIDPCSIC. Positions 83–178 constitute a Toprim domain; it reads ATIIVVEDIA…KVTRLAHGVP (96 aa).

This sequence belongs to the RecR family.

Its function is as follows. May play a role in DNA repair. It seems to be involved in an RecBC-independent recombinational process of DNA repair. It may act with RecF and RecO. This Bartonella henselae (strain ATCC 49882 / DSM 28221 / CCUG 30454 / Houston 1) (Rochalimaea henselae) protein is Recombination protein RecR.